A 335-amino-acid chain; its full sequence is DNA-directed RNA polymerase subunit alpha (335 aa).

Residues 1 to 233 are alpha N-terminal domain (alpha-NTD); that stretch reads MVREKIRVST…DLLIPFLHAE (233 aa). Residues 263 to 335 form an alpha C-terminal domain (alpha-CTD) region; the sequence is KKKIALKFIF…HFVIDLKNKR (73 aa).

The protein belongs to the RNA polymerase alpha chain family. In plastids the minimal PEP RNA polymerase catalytic core is composed of four subunits: alpha, beta, beta', and beta''. When a (nuclear-encoded) sigma factor is associated with the core the holoenzyme is formed, which can initiate transcription.

It localises to the plastid. The protein localises to the chloroplast. The enzyme catalyses RNA(n) + a ribonucleoside 5'-triphosphate = RNA(n+1) + diphosphate. Functionally, DNA-dependent RNA polymerase catalyzes the transcription of DNA into RNA using the four ribonucleoside triphosphates as substrates. This Spinacia oleracea (Spinach) protein is DNA-directed RNA polymerase subunit alpha.